A 1125-amino-acid chain; its full sequence is Telomerase reverse transcriptase (1125 aa).

Positions 1–234 (MPRAPRCRAV…ARRRRSSARG (234 aa)) are RNA-interacting domain 1. The tract at residues 58–199 (VPWDAQPPPA…RQVGGTRAGF (142 aa)) is GQ motif. The required for regulating specificity for telomeric DNA and for processivity for primer elongation stretch occupies residues 137-141 (WGLLL). The segment at 186–308 (RRPTRQVGGT…WRLSPSEGEP (123 aa)) is disordered. The segment covering 224 to 243 (GARRRRSSARGRLPPAKRPR) has biased composition (basic residues). A Bipartite nuclear localization signal motif is present at residues 226–244 (RRRRSSARGRLPPAKRPRR). Residue S231 is modified to Phosphoserine; by PKB/AKT1. The tract at residues 235 to 312 (RLPPAKRPRR…PSEGEPGAGA (78 aa)) is linker. Composition is skewed to basic and acidic residues over residues 244-253 (RGLEPGRDLE) and 269-279 (DAAEAKSRKGD). Positions 290–531 (GERGVGSASW…VPAAEHRQRE (242 aa)) are required for oligomerization. The RNA-interacting domain 2 stretch occupies residues 313–543 (CAETKRFLYC…LGRFLHWLMG (231 aa)). A TFLY; involved in RNA binding motif is present at residues 316–321 (TKRFLY). A QFP motif region spans residues 364–514 (PRRPRRLPAR…MKVQDCAWLR (151 aa)). The segment at 385-405 (LGNHARSPYGALLRAHCPLPA) is CP motif. S450 carries the phosphoserine; by DYRK2 modification. One can recognise a Reverse transcriptase domain in the interval 598-928 (EVRQHQEARP…CLFPWCGLLL (331 aa)). At Y700 the chain carries Phosphotyrosine; by SRC-type Tyr-kinases. Residues D705, D861, and D862 each coordinate Mg(2+). The interval 907–921 (LGGAAPLQLPAHCLF) is required for oligomerization. A primer grip sequence region spans residues 923-927 (WCGLL). The interval 929–1125 (DTRTLEVHGD…LTADFKTILD (197 aa)) is CTE.

This sequence belongs to the reverse transcriptase family. Telomerase subfamily. As to quaternary structure, catalytic component of the telomerase holoenzyme complex composed of one molecule of TERT, one molecule of WRAP53/TCAB1, two molecules of H/ACA ribonucleoprotein complex subunits DKC1, NOP10, NHP2 and GAR1, and a telomerase RNA template component (TERC). The telomerase holoenzyme complex is associated with TEP1, SMG6/EST1A and POT1. The molecular chaperone HSP90/P23 complex is required for correct assembly and stabilization of the active telomerase. Interacts directly with HSP90A and PTGES3. Interacts with HSPA1A; the interaction occurs in the absence of TERC and dissociates once the complex has formed. Interacts with RAN; the interaction promotes nuclear export of TERT. Interacts with XPO1. Interacts with PTPN11; the interaction retains TERT in the nucleus. Interacts with NCL (via RRM1 and C-terminal RRM4/Arg/Gly-rich domains); the interaction is important for nucleolar localization of TERT. Interacts with SMARCA4 (via the bromodomain); the interaction regulates Wnt-mediated signaling. Interacts with MCRS1 (isoform MCRS2); the interaction inhibits in vitro telomerase activity. Interacts with PIF1; the interaction has no effect on the elongation activity of TERT. Interacts with PML; the interaction recruits TERT to PML bodies and inhibits telomerase activity. Interacts with GNL3L. Interacts with isoform 1 and isoform 2 of NVL. Interacts with DHX36. Interacts with ATF7. Phosphorylation at Tyr-700 under oxidative stress leads to translocation of TERT to the cytoplasm and reduces its antiapoptotic activity. Dephosphorylated by SHP2/PTPN11 leading to nuclear retention. Phosphorylation at Ser-231 by the AKT pathway promotes nuclear location. Phosphorylation at the G2/M phase at Ser-450 by DYRK2 promotes ubiquitination by the EDVP complex and degradation. Post-translationally, ubiquitinated by the EDVP complex, a E3 ligase complex following phosphorylation at Ser-450 by DYRK2. Ubiquitinated leads to proteasomal degradation.

The protein resides in the nucleus. It is found in the nucleolus. It localises to the nucleoplasm. Its subcellular location is the chromosome. The protein localises to the telomere. The protein resides in the cytoplasm. It is found in the PML body. The enzyme catalyses DNA(n) + a 2'-deoxyribonucleoside 5'-triphosphate = DNA(n+1) + diphosphate. Functionally, telomerase is a ribonucleoprotein enzyme essential for the replication of chromosome termini in most eukaryotes. Active in progenitor and cancer cells. Inactive, or very low activity, in normal somatic cells. Catalytic component of the teleromerase holoenzyme complex whose main activity is the elongation of telomeres by acting as a reverse transcriptase that adds simple sequence repeats to chromosome ends by copying a template sequence within the RNA component of the enzyme. Catalyzes the RNA-dependent extension of 3'-chromosomal termini with the 6-nucleotide telomeric repeat unit, 5'-TTAGGG-3'. The catalytic cycle involves primer binding, primer extension and release of product once the template boundary has been reached or nascent product translocation followed by further extension. More active on substrates containing 2 or 3 telomeric repeats. Telomerase activity is regulated by a number of factors including telomerase complex-associated proteins, chaperones and polypeptide modifiers. Modulates Wnt signaling. Plays important roles in aging and antiapoptosis. This is Telomerase reverse transcriptase (TERT) from Bos taurus (Bovine).